The chain runs to 150 residues: Phosphoribosyl-AMP cyclohydrolase (150 aa).

Mg(2+) is bound at residue aspartate 92. Cysteine 93 provides a ligand contact to Zn(2+). The Mg(2+) site is built by aspartate 94 and aspartate 96. Zn(2+) contacts are provided by cysteine 111 and cysteine 118.

This sequence belongs to the PRA-CH family. Homodimer. It depends on Mg(2+) as a cofactor. Zn(2+) serves as cofactor.

It is found in the cytoplasm. The catalysed reaction is 1-(5-phospho-beta-D-ribosyl)-5'-AMP + H2O = 1-(5-phospho-beta-D-ribosyl)-5-[(5-phospho-beta-D-ribosylamino)methylideneamino]imidazole-4-carboxamide. It participates in amino-acid biosynthesis; L-histidine biosynthesis; L-histidine from 5-phospho-alpha-D-ribose 1-diphosphate: step 3/9. Functionally, catalyzes the hydrolysis of the adenine ring of phosphoribosyl-AMP. The chain is Phosphoribosyl-AMP cyclohydrolase from Agrobacterium fabrum (strain C58 / ATCC 33970) (Agrobacterium tumefaciens (strain C58)).